The chain runs to 300 residues: 33 kDa chaperonin (300 aa).

2 cysteine pairs are disulfide-bonded: C235/C237 and C269/C272.

This sequence belongs to the HSP33 family. Post-translationally, under oxidizing conditions two disulfide bonds are formed involving the reactive cysteines. Under reducing conditions zinc is bound to the reactive cysteines and the protein is inactive.

The protein localises to the cytoplasm. Its function is as follows. Redox regulated molecular chaperone. Protects both thermally unfolding and oxidatively damaged proteins from irreversible aggregation. Plays an important role in the bacterial defense system toward oxidative stress. This chain is 33 kDa chaperonin, found in Pseudomonas fluorescens (strain SBW25).